The chain runs to 200 residues: Probable nicotinate-nucleotide adenylyltransferase (200 aa).

Belongs to the NadD family.

The catalysed reaction is nicotinate beta-D-ribonucleotide + ATP + H(+) = deamido-NAD(+) + diphosphate. It functions in the pathway cofactor biosynthesis; NAD(+) biosynthesis; deamido-NAD(+) from nicotinate D-ribonucleotide: step 1/1. Functionally, catalyzes the reversible adenylation of nicotinate mononucleotide (NaMN) to nicotinic acid adenine dinucleotide (NaAD). This is Probable nicotinate-nucleotide adenylyltransferase from Clostridium botulinum (strain Eklund 17B / Type B).